Here is a 471-residue protein sequence, read N- to C-terminus: MTDLPASVRWQLWIVAFGFFMQSLDTTIVNTALPSMAKSLGESPLHMHMIIVSYVLTVAVMLPASGWLADRVGVRNIFFTAIVLFTAGSLFCAQASTLDQLVMARVLQGIGGAMMVPVGRLTVMKIVPRDQYMAAMTFVTLPGQVGPLLGPALGGVLVEYASWHWIFLINIPVGIVGAIATLCLMPNYTLQTRRFDLSGFLLLAAGMATLTLALDGQKGLGISSRWLAGLVAVGLAALLLYLWHARGNARALFSLNLFRNRTFSLGLGGSFAGRIGSGMLPFMTPVFLQIGLGFSPFHAGLMMIPMVLGSMGMKRIVVQVVNRFGYRRVLVASTLGLAAVSLLFMFSALAGWYYALPLVLFLQGMINSSRFSSMNTLTLKDLPDDLASSGNSLLSMVMQLSMSIGVTIAGLLLGLYGQQHMSLDAASTHQVFLYTYLSMAAIIALPALIFSRVPDDVGTNTVIRRRNRSGS.

Helical transmembrane passes span 12–32, 49–69, 77–97, 106–126, 138–158, 165–185, 195–215, 220–240, 263–283, 286–306, 342–362, 393–413, and 431–451; these read LWIV…VNTA, MIIV…GWLA, IFFT…QAST, VLQG…VMKI, FVTL…GVLV, WIFL…LCLM, FDLS…LALD, LGIS…ALLL, FSLG…LPFM, VFLQ…MIPM, LLFM…VLFL, LLSM…GLLL, and VFLY…LIFS.

It belongs to the major facilitator superfamily. TCR/Tet family.

It localises to the cell inner membrane. This chain is Putative multidrug resistance protein MdtD, found in Klebsiella pneumoniae (strain 342).